Consider the following 343-residue polypeptide: Plasminogen (343 aa).

2 Kringle domains span residues 1-17 (APQAPSVENPPEADCML) and 41-120 (AQEP…GCVA). The interval 1-140 (APQAPSVENP…LRRRSREHFC (140 aa)) is plasmin heavy chain A. Intrachain disulfides connect cysteine 15/cysteine 94, cysteine 36/cysteine 77, and cysteine 65/cysteine 89. The Peptidase S1 domain maps to 114-341 (VVGGCVATPH…YVPWIEETMR (228 aa)). Position 130 is a phosphoserine (serine 130). Cysteine 140 and cysteine 156 are disulfide-bonded. Residues 141-343 (GGTLISPEWV…PWIEETMRRY (203 aa)) are plasmin light chain B. Residues histidine 155 and aspartate 198 each act as charge relay system in the active site. Serine 221 is subject to Phosphoserine. Cystine bridges form between cysteine 232/cysteine 299, cysteine 262/cysteine 278, and cysteine 289/cysteine 317. The Charge relay system role is filled by serine 293.

Belongs to the peptidase S1 family. Plasminogen subfamily. As to quaternary structure, interacts with CSPG4 and AMOT. Interacts (via the Kringle domains) with HRG; the interaction tethers PLG to the cell surface and enhances its activation. Interacts (via Kringle 4 domain) with ADA; the interaction stimulates PLG activation when in complex with DPP4. Angiostatin: Interacts with ATP5F1A; the interaction inhibits most of the angiogenic effects of angiostatin.

Its subcellular location is the secreted. The catalysed reaction is Preferential cleavage: Lys-|-Xaa &gt; Arg-|-Xaa, higher selectivity than trypsin. Converts fibrin into soluble products.. Its activity is regulated as follows. Converted into plasmin by plasminogen activators, both plasminogen and its activator being bound to fibrin. Cannot be activated with streptokinase. Functionally, plasmin dissolves the fibrin of blood clots and acts as a proteolytic factor in a variety of other processes including embryonic development, tissue remodeling, tumor invasion, and inflammation. In ovulation, weakens the walls of the Graafian follicle. It activates the urokinase-type plasminogen activator, collagenases and several complement zymogens, such as C1, C4 and C5. Cleavage of fibronectin and laminin leads to cell detachment and apoptosis. Also cleaves fibrin, thrombospondin and von Willebrand factor. Its role in tissue remodeling and tumor invasion may be modulated by CSPG4. Binds to cells. The sequence is that of Plasminogen (PLG) from Ovis aries (Sheep).